A 629-amino-acid polypeptide reads, in one-letter code: Polyadenylate-binding protein 2 (629 aa).

Residues 1–12 (MAQVQLQGQTPN) are compositionally biased toward polar residues. Residues 1 to 25 (MAQVQLQGQTPNGSTAAVTSAPATS) are disordered. A compositionally biased stretch (low complexity) spans 13–25 (GSTAAVTSAPATS). RRM domains are found at residues 36–114 (TSLY…YSHR), 124–201 (GNIF…PFLR), 215–292 (TNVY…RAQK), and 318–395 (SNLY…IAQR). The disordered stretch occupies residues 480-507 (PQQQRPGGGRRPGGIQHSQQQNPMMQQQ). Over residues 492–507 (GGIQHSQQQNPMMQQQ) the composition is skewed to low complexity. The PABC domain occupies 539-616 (TIGALASNLS…AMDVLRSVAA (78 aa)).

Belongs to the polyadenylate-binding protein type-1 family. As to quaternary structure, interacts with eIF-iso4G. Interacts with ERD15/CID1 and CID7. Interacts with Turnip mosaic virus (TuMV) VPg-Pro and RNA-dependent RNA polymerase (RdRp). In terms of tissue distribution, expressed in all organs (at the protein level) but under distinct spatial and temporal regulation within each organ.

It localises to the cytoplasm. Its subcellular location is the nucleus. Binds the poly(A) tail of mRNA. Appears to be an important mediator of the multiple roles of the poly(A) tail in mRNA biogenesis, stability and translation. In the cytoplasm, affects both translation and mRNA decay. Stimulates translation by interaction with translation initiation factor eIF4G, a subunit of the cap-binding complex eIF4F, bringing the 5'- and 3'-ends of the mRNA in proximity. The formation of this circular mRNP structure appears to be critical for the synergistic effects of the cap and the poly(A) tail in facilitating translation initiation, recycling of ribosomes, and mRNA stability. During infection with potyvirus TuMV, acts as a potential integral component of the viral replicase complex that could play an important role in the regulation of potyviral RNA-dependent RNA polymerase (RdRp). Binds to uridylated mRNAs and determines the size of uridine extensions. Limits uridine extension by URT1, likely by binding to the oligo(A) tail and preventing URT1 access. The polypeptide is Polyadenylate-binding protein 2 (PAB2) (Arabidopsis thaliana (Mouse-ear cress)).